We begin with the raw amino-acid sequence, 1154 residues long: MKRNIFIKLLISLLLLSSCTGDTCIDPDDFGFIKFNVSSRYNPEEITSRHEGDQVAPWRDSAYKVNGYPLTIMVRPWNYILGDKNTSGQLSAWCPWYGQKNNTTTLAPFCIKLQPCTFWDNTRLDMCTPNPENRNDAMISNPPCIMTDGVGLYFLIAAKNTDPNISPDSQRKPQGITRHLGELTSSVGYEFYSISSTGQLLKAGGINYQYNGEDKSKYAQSPLYFKIIDKFYDDNSGQYRLVIKSGVSDTRPDPLQFLTDLIKDVLFGKNGIIKKTYQQIVDTPGYRISVSAILTLYIMFTGLSFLIGNINLTHVELIIRIFKISIISILLSSDKAWTFFHDYLFVFFIDGVQQILQIINEAAATGPGSQSLLGLLISTQTLSKLFSLLFVDWLGFIYIILYLIALYFIFFLIFKATIIYLTALITIGMMIIMGPIFICFMLFNITRSLFENWLRQLISYALQPIILFAGIAFISMIIRTEIYSTLGFGVCKHDFPNLGPINEIFGSFLEDIDPSLSNSIFYWWFPVPMKGGINNFHKAKILVPNDHIVVDDSCKNNHDKCKHCAAYECIDERYIELPFLDLVKDSTRINNFINGKFVQLDGILLIFVSIYLLSKFNDTAISTAQFIAGTSGNLTDIQKVNQQSYESVSQQINRPLNYVAKTISTPVTSRISAGTAQANMFFAEKFENMMMRRLEKQALSSSANKVVQNEVKRKYGIDSKDVNMNAIKDYEDGISRLLNNLPKGNELKVKELSQMKFTQLRDKISANKYDVQDYTTLSTEQKTELDKLLKDANLRVLASDANFTKDYQEAYKHAHQEMSGRGIGLFGKNIGVLRSWQEMEHSINVKRKLKEEKRIGIGEKIYAGYTGIKRAALTTIVGKDLRDAYEGNLTSAEWHDFEYNDPRLRTYSEKLKDDEKAREREKLRMHINKETLAVQADILSPEYLVKLEKAGRKSDVEYYQELAQRQLIYDVHSKLFEEGEPVMMGDRFMREKATDSQMRDMIDNAHKKYVELIDVDRYTRRQEYYDIIYEKAKENLEQTYKEVQDHFKRDNISIEEMPALIAQKVKDTNAGSEIDKKITEELNNFNADVKNYEYSTAVLNKIEDRKQTITDVVNVQIDKINKYRENAKMEQYVKPILNEGRKLRTLEDHFKNMK.

The signal sequence occupies residues 1–18; it reads MKRNIFIKLLISLLLLSS. Residue Cys19 is the site of N-palmitoyl cysteine attachment. A lipid anchor (S-diacylglycerol cysteine) is attached at Cys19. 4 consecutive transmembrane segments (helical) span residues 288 to 308, 394 to 414, 423 to 443, and 458 to 478; these read ISVS…FLIG, LGFI…FLIF, ALIT…FMLF, and ISYA…SMII.

It belongs to the TrbL/VirB6 family.

It localises to the cell membrane. This is an uncharacterized protein from Rickettsia typhi (strain ATCC VR-144 / Wilmington).